A 136-amino-acid polypeptide reads, in one-letter code: Small integral membrane protein 23 (136 aa).

Topologically, residues 1–31 (MTIQKTGCRGREAAEVVEQRRRSHHCDDRKQ) are cytoplasmic. The helical; Signal-anchor for type II membrane protein transmembrane segment at 32–52 (TLLALLILVLYLGMGISGSSW) threads the bilayer. Residues 53-136 (EVSGQTKDCN…DLRPEDPCFT (84 aa)) are Extracellular-facing. A coiled-coil region spans residues 92–124 (LKINLHGFLEKLEKEVRELEQLVRDLEFWLDAL).

The protein localises to the membrane. This chain is Small integral membrane protein 23 (Smim23), found in Mus musculus (Mouse).